Consider the following 217-residue polypeptide: MTTASQTRTPRGRRSARPSGDDREAAILATAQRLLETKKFAEISVDDLAKGAGISRPTFYFYFPSKEAVLLSLIDPLIKRADSGFDNAVESMPADPQRAIRRGIEIFFNSFGSHPATARAGTEALKSSPEFKEFWSGLMQKWIAATAALITAERERGAAPDTIPALDLATSLNLMNERTMMAALADEQPGVAPEKVVATLTHIWLNSIYGTLPVGTA.

The segment at 1–22 (MTTASQTRTPRGRRSARPSGDD) is disordered. Positions 21–81 (DDREAAILAT…SLIDPLIKRA (61 aa)) constitute an HTH tetR-type domain. The segment at residues 44 to 63 (SVDDLAKGAGISRPTFYFYF) is a DNA-binding region (H-T-H motif).

In terms of assembly, homodimer.

Functionally, involved in the repression of teh monooxygenase EthA which is responsible of the formation of the active metabolite of ethionamide (ETH). In Mycolicibacterium smegmatis (strain ATCC 700084 / mc(2)155) (Mycobacterium smegmatis), this protein is HTH-type transcriptional regulator EthR (ethR).